A 224-amino-acid chain; its full sequence is Putative cobalt transport protein CbiM (224 aa).

A run of 6 helical transmembrane segments spans residues 8–28 (LPPL…VYGI), 41–61 (AMPM…LKMP), 75–95 (FGAV…VLVF), 108–128 (LGAN…AVWL), 138–158 (EIAM…VTAI), and 169–189 (FFTA…PLAI).

This sequence belongs to the CbiM family. In terms of assembly, forms an energy-coupling factor (ECF) transporter complex composed of an ATP-binding protein (A component, CbiO), a transmembrane protein (T component, CbiQ) and 2 possible substrate-capture proteins (S components, CbiM and CbiN) of unknown stoichimetry.

The protein resides in the cell membrane. Its pathway is cofactor biosynthesis; adenosylcobalamin biosynthesis. Its function is as follows. Part of the energy-coupling factor (ECF) transporter complex CbiMNOQ involved in cobalt import. The chain is Putative cobalt transport protein CbiM from Methanosphaera stadtmanae (strain ATCC 43021 / DSM 3091 / JCM 11832 / MCB-3).